The primary structure comprises 364 residues: Cobalt-precorrin-5B C(1)-methyltransferase (364 aa).

It belongs to the CbiD family.

The enzyme catalyses Co-precorrin-5B + S-adenosyl-L-methionine = Co-precorrin-6A + S-adenosyl-L-homocysteine. It functions in the pathway cofactor biosynthesis; adenosylcobalamin biosynthesis; cob(II)yrinate a,c-diamide from sirohydrochlorin (anaerobic route): step 6/10. Functionally, catalyzes the methylation of C-1 in cobalt-precorrin-5B to form cobalt-precorrin-6A. This Pseudomonas entomophila (strain L48) protein is Cobalt-precorrin-5B C(1)-methyltransferase.